The primary structure comprises 498 residues: N-succinylglutamate 5-semialdehyde dehydrogenase 1 (498 aa).

231-236 (GSSNTG) is a binding site for NAD(+). Catalysis depends on residues E254 and C288.

Belongs to the aldehyde dehydrogenase family. AstD subfamily.

It carries out the reaction N-succinyl-L-glutamate 5-semialdehyde + NAD(+) + H2O = N-succinyl-L-glutamate + NADH + 2 H(+). It participates in amino-acid degradation; L-arginine degradation via AST pathway; L-glutamate and succinate from L-arginine: step 4/5. Its function is as follows. Catalyzes the NAD-dependent reduction of succinylglutamate semialdehyde into succinylglutamate. This chain is N-succinylglutamate 5-semialdehyde dehydrogenase 1, found in Shewanella denitrificans (strain OS217 / ATCC BAA-1090 / DSM 15013).